We begin with the raw amino-acid sequence, 33 residues long: U13-ctenitoxin-Pn1c (33 aa).

Disulfide bonds link C3-C17, C10-C21, and C16-C30.

Expressed by the venom gland.

Its subcellular location is the secreted. Functionally, acts as a neurotoxin. This Phoneutria nigriventer (Brazilian armed spider) protein is U13-ctenitoxin-Pn1c.